The chain runs to 91 residues: Alpha-defensin 31 (91 aa).

A signal peptide spans 1–19 (MKKLVLLFALVLLAFQVQA). A propeptide spanning residues 20 to 65 (DSIQNTDEETKTEEQQGEEDQAVSVSFGDPQGSGLQDAALGWGRRC) is cleaved from the precursor. The segment at 22–55 (IQNTDEETKTEEQQGEEDQAVSVSFGDPQGSGLQ) is disordered. A run of 6 repeats spans residues 65 to 67 (CPR), 68 to 70 (CPP), 71 to 73 (CPR), 77 to 79 (CPR), 80 to 82 (CPT), and 83 to 85 (CPR). Residues 65–85 (CPRCPPCPRCSWCPRCPTCPR) form a 6 X 3 AA tandem repeats of C-P-X region.

Belongs to the alpha-defensin family. Paneth cells of the small bowel.

It is found in the secreted. Its function is as follows. Apparent precursor of a secreted, cationic, proline- and cysteine-rich peptide that contains Cys-Pro-Xaa repeats. Unlike cryptdin, the proposed mature peptide region lacks the structural motif characteristic of defensins. It may have microbicidal activities. This chain is Alpha-defensin 31, found in Mus musculus (Mouse).